The chain runs to 1217 residues: ATP-dependent RNA helicase DHX30 (1217 aa).

Phosphoserine occurs at positions 15 and 29. Residues P76–F144 form the DRBM domain. The tract at residues W176–G223 is disordered. Residues E211–G223 are compositionally biased toward acidic residues. Residues S249 and S403 each carry the phosphoserine modification. The Helicase ATP-binding domain maps to L467 to P635. Residue G480–T487 coordinates ATP. The DEAH box signature appears at D582–H585. One can recognise a Helicase C-terminal domain in the interval L677–M850.

It belongs to the DEAD box helicase family. DEAH subfamily. Identified in a complex with TFAM and SSBP1. Interacts (via N-terminus) with ZC3HAV1 (via N-terminal domain) in an RNA-independent manner. Found in a complex with GRSF1, DDX28, FASTKD2 and FASTKD5. Phosphorylated on Ser-15. In terms of tissue distribution, expressed in the heart, brain, spleen, lung, liver, skeletal muscle, kidney, and testis. Expression is strongest in the testis and brain, while the lowest levels of expression are found in the spleen and lung.

The protein localises to the cytoplasm. Its subcellular location is the mitochondrion. It localises to the mitochondrion matrix. The protein resides in the mitochondrion nucleoid. The catalysed reaction is ATP + H2O = ADP + phosphate + H(+). RNA-dependent helicase. Plays an important role in the assembly of the mitochondrial large ribosomal subunit. Required for optimal function of the zinc-finger antiviral protein ZC3HAV1. Associates with mitochondrial DNA. Involved in nervous system development and differentiation through its involvement in the up-regulation of a number of genes which are required for neurogenesis, including GSC, NCAM1, neurogenin, and NEUROD. The polypeptide is ATP-dependent RNA helicase DHX30 (Dhx30) (Mus musculus (Mouse)).